A 444-amino-acid chain; its full sequence is Enolase 2 (444 aa).

The substrate site is built by H165 and E174. The active-site Proton donor is E217. Mg(2+) is bound by residues D252, E303, and D330. Positions 303 and 330 each coordinate substrate. K355 acts as the Proton acceptor in catalysis. Substrate contacts are provided by residues 382-385 (SHRS) and K406.

This sequence belongs to the enolase family. As to quaternary structure, homodimer. Mg(2+) is required as a cofactor.

It is found in the cytoplasm. It carries out the reaction (2R)-2-phosphoglycerate = phosphoenolpyruvate + H2O. It participates in carbohydrate degradation; glycolysis; pyruvate from D-glyceraldehyde 3-phosphate: step 4/5. This chain is Enolase 2 (ENO2), found in Toxoplasma gondii.